A 235-amino-acid chain; its full sequence is Sugar fermentation stimulation protein homolog (235 aa).

Belongs to the SfsA family.

The protein is Sugar fermentation stimulation protein homolog of Roseobacter denitrificans (strain ATCC 33942 / OCh 114) (Erythrobacter sp. (strain OCh 114)).